The following is a 207-amino-acid chain: Guanylate kinase (207 aa).

One can recognise a Guanylate kinase-like domain in the interval 4 to 184 (NMYYAISAPS…TLNKIKTIII (181 aa)). 11–18 (APSGTGKS) contacts ATP.

The protein belongs to the guanylate kinase family.

The protein localises to the cytoplasm. It catalyses the reaction GMP + ATP = GDP + ADP. Functionally, essential for recycling GMP and indirectly, cGMP. This is Guanylate kinase from Wigglesworthia glossinidia brevipalpis.